The sequence spans 1165 residues: Adhesion G-protein coupled receptor G6 (1165 aa).

Positions 1 to 30 are cleaved as a signal peptide; sequence MMFDTLGKRCCPWRLKPSALLFLFVLCVTC. At 31–832 the chain is on the extracellular side; the sequence is VPLSVCGCGS…ASQIDGRNTK (802 aa). Cysteines 41 and 67 form a disulfide. The region spanning 41–149 is the CUB domain; the sequence is CRLVLSNPSG…KGFNASYIRV (109 aa). 2 residues coordinate Ca(2+): E89 and D97. The cysteines at positions 94 and 111 are disulfide-linked. A glycan (N-linked (GlcNAc...) asparagine) is linked at N121. Positions 134, 136, and 137 each coordinate Ca(2+). N143 is a glycosylation site (N-linked (GlcNAc...) asparagine). Residues 154-356 form the Pentraxin (PTX) domain; the sequence is RNQKVILPQT…ALKAEGNLSC (203 aa). Intrachain disulfides connect C186-C254 and C231-C277. N-linked (GlcNAc...) asparagine glycans are attached at residues N258, N314, N324, N353, N370, N410, N417, N424, N458, N462, and N478. The segment at 446–807 is mediates interaction with laminin-2; the sequence is DKRLVLWALL…LDAGETICLC (362 aa). Intrachain disulfides connect C498-C533 and C521-C550. Residues N536, N549, N563, N570, N665, N674, N720, N746, N781, and N788 are each glycosylated (N-linked (GlcNAc...) asparagine). The GAIN-B domain maps to 640-823; sequence PHVNIETQNL…GVLMDLPRSA (184 aa). 2 disulfide bridges follow: C773–C805 and C792–C807. Residues 773–823 are GPS; sequence CAFWDMNKNKSFGGWNTSGCVAHSDLDAGETICLCSHFTHFGVLMDLPRSA. A stachel region spans residues 812 to 820; that stretch reads HFGVLMDLP. A helical membrane pass occupies residues 833-853; it reads VLTFITYIGCGISAIFSAATL. The Cytoplasmic portion of the chain corresponds to 854 to 873; the sequence is LTYVAFEKLRRDYPSKILMN. A helical transmembrane segment spans residues 874–894; sequence LSSALLFLNLIFLLDGWVTSF. The Extracellular portion of the chain corresponds to 895-899; the sequence is GVAGL. A helical membrane pass occupies residues 900 to 920; that stretch reads CTAVAALLHFFLLATFTWMGL. Over 921 to 940 the chain is Cytoplasmic; it reads EAIHMYIALVKVFNTYIHRY. Residues 941 to 961 traverse the membrane as a helical segment; it reads ILKFCIIGWGLPALVVSIILV. Over 962 to 994 the chain is Extracellular; it reads SRRQNEVYGKESYGKDQDDEFCWIQDPVVFYVS. The helical transmembrane segment at 995 to 1015 threads the bilayer; the sequence is CAGYFGVMFFLNVAMFIVVMV. The Cytoplasmic segment spans residues 1016–1039; it reads QICGRNGKRSNRTLREEVLRNLRS. Residues 1040 to 1060 traverse the membrane as a helical segment; it reads VVSLTFLLGMTWGFAFFAWGP. Topologically, residues 1061-1062 are extracellular; the sequence is LN. The chain crosses the membrane as a helical span at residues 1063–1083; the sequence is IPFMYLFSIFNSLQGLFIFIF. N1073 contacts 17alpha-hydroxyprogesterone. Topologically, residues 1084-1165 are cytoplasmic; sequence HCAMKENVQK…KRNSHSDNFS (82 aa). Over residues 1126-1154 the composition is skewed to low complexity; the sequence is NLGKSLSSSSIGSNSTYLTSKSKSSSTTY. The segment at 1126–1165 is disordered; sequence NLGKSLSSSSIGSNSTYLTSKSKSSSTTYFKRNSHSDNFS. Phosphoserine occurs at positions 1135 and 1138.

The protein belongs to the G-protein coupled receptor 2 family. Adhesion G-protein coupled receptor (ADGR) subfamily. Heterodimer of 2 chains generated by proteolytic processing; the large extracellular N-terminal fragment and the membrane-bound C-terminal fragment predominantly remain associated and non-covalently linked. Interacts with Laminin-2; this interaction stabilizes the receptor in an inactive state. Laminin-2 polymerization could facilitate ADGRG6-NTF removal, thereby exposing the tethered agonist to drive myelination. Interacts with PRNP. Interacts with ITGB1. Interacts with LRP1. In terms of processing, proteolytically cleaved into 2 conserved sites: one in the GPS region of the GAIN-B domain (S1 site) and the other in the middle of the extracellular domain (S2 site). The proteolytic cleavage at S1 site generates an extracellular subunit and a seven-transmembrane subunit. Furin is involved in the cleavage of the S2 site generating a soluble fragment. Processing at the GPS region occurred independent of and probably prior to the cleavage at the S2 site. Proteolytic cleavage is required for activation of the receptor. Expressed at high levels in the heart, somite and otic vesicle during embryogenesis and in adult lung.

The protein resides in the cell membrane. Forms a heterodimer of 2 chains generated by proteolytic processing that remain associated through non-covalent interactions mediated by the GAIN-B domain. In the inactivated receptor, the Stachel sequence (also named stalk) is embedded in the GAIN-B domain, where it adopts a beta-strand conformation. On activation, the Stachel moves into the 7 transmembrane region and adopts a twisted hook-shaped configuration that forms contacts within the receptor, leading to coupling of a G-alpha protein, which activates signaling. The cleaved GAIN-B and N-terminal domains can then dissociate from the rest of the receptor. In terms of biological role, adhesion G-protein coupled receptor (aGPCR) for steroid hormones, such as progesterone and 17alpha-hydroxyprogesterone (17OHP). Involved in many biological processes, such as myelination, sprouting angiogenesis, placenta, ear and cartilage development. Ligand binding causes a conformation change that triggers signaling via guanine nucleotide-binding proteins (G proteins) and modulates the activity of downstream effectors, such as adenylate cyclase. ADGRG6 is coupled to G(i) G alpha proteins and mediates inhibition of adenylate cyclase. Also able to couple to G(q) G proteins. Involved in myelination of the peripheral nervous system: required for differentiation of promyelinating Schwann cells and for normal myelination of axons. Also acts as a regulator of body length and bone mass. Acts as a regulator of blood-brain barrier formation in the central nervous system vie its association with LRP1 and ITGB1. The polypeptide is Adhesion G-protein coupled receptor G6 (Mus musculus (Mouse)).